A 189-amino-acid chain; its full sequence is Glycerol-3-phosphate acyltransferase (189 aa).

Transmembrane regions (helical) follow at residues 1 to 21 (MFWL…AIVL), 50 to 70 (KLAI…VLLA), 77 to 97 (LHAQ…PLYF), 111 to 131 (MLMA…LLTF), and 151 to 171 (LLAW…VMIV).

This sequence belongs to the PlsY family. In terms of assembly, probably interacts with PlsX.

The protein localises to the cell inner membrane. It carries out the reaction an acyl phosphate + sn-glycerol 3-phosphate = a 1-acyl-sn-glycero-3-phosphate + phosphate. It participates in lipid metabolism; phospholipid metabolism. Its function is as follows. Catalyzes the transfer of an acyl group from acyl-phosphate (acyl-PO(4)) to glycerol-3-phosphate (G3P) to form lysophosphatidic acid (LPA). This enzyme utilizes acyl-phosphate as fatty acyl donor, but not acyl-CoA or acyl-ACP. This Pseudomonas putida (strain ATCC 47054 / DSM 6125 / CFBP 8728 / NCIMB 11950 / KT2440) protein is Glycerol-3-phosphate acyltransferase.